The primary structure comprises 94 residues: MFKFNAEVRQSQGKGASRRLRHNGQIPAIVYGGSEAPVSIVLNHDDLNNAQVHDAFYTDVITLVIEGKEVAVKAQAMQRHPFKPKLVHIDFKRV.

Residues 1–20 (MFKFNAEVRQSQGKGASRRL) are disordered.

It belongs to the bacterial ribosomal protein bL25 family. Part of the 50S ribosomal subunit; part of the 5S rRNA/L5/L18/L25 subcomplex. Contacts the 5S rRNA. Binds to the 5S rRNA independently of L5 and L18.

In terms of biological role, this is one of the proteins that binds to the 5S RNA in the ribosome where it forms part of the central protuberance. This chain is Large ribosomal subunit protein bL25, found in Pasteurella multocida (strain Pm70).